A 446-amino-acid chain; its full sequence is Na(+)-translocating NADH-quinone reductase subunit A (446 aa).

The protein belongs to the NqrA family. In terms of assembly, composed of six subunits; NqrA, NqrB, NqrC, NqrD, NqrE and NqrF.

It carries out the reaction a ubiquinone + n Na(+)(in) + NADH + H(+) = a ubiquinol + n Na(+)(out) + NAD(+). Functionally, NQR complex catalyzes the reduction of ubiquinone-1 to ubiquinol by two successive reactions, coupled with the transport of Na(+) ions from the cytoplasm to the periplasm. NqrA to NqrE are probably involved in the second step, the conversion of ubisemiquinone to ubiquinol. The sequence is that of Na(+)-translocating NADH-quinone reductase subunit A from Vibrio campbellii (strain ATCC BAA-1116).